Reading from the N-terminus, the 86-residue chain is Cell division topological specificity factor (86 aa).

The protein belongs to the MinE family.

Prevents the cell division inhibition by proteins MinC and MinD at internal division sites while permitting inhibition at polar sites. This ensures cell division at the proper site by restricting the formation of a division septum at the midpoint of the long axis of the cell. The chain is Cell division topological specificity factor from Photobacterium profundum (strain SS9).